Reading from the N-terminus, the 205-residue chain is ATP-dependent Clp protease proteolytic subunit 2 (205 aa).

Serine 100 (nucleophile) is an active-site residue. Residue histidine 125 is part of the active site.

The protein belongs to the peptidase S14 family. As to quaternary structure, fourteen ClpP subunits assemble into 2 heptameric rings which stack back to back to give a disk-like structure with a central cavity, resembling the structure of eukaryotic proteasomes.

It localises to the cytoplasm. It carries out the reaction Hydrolysis of proteins to small peptides in the presence of ATP and magnesium. alpha-casein is the usual test substrate. In the absence of ATP, only oligopeptides shorter than five residues are hydrolyzed (such as succinyl-Leu-Tyr-|-NHMec, and Leu-Tyr-Leu-|-Tyr-Trp, in which cleavage of the -Tyr-|-Leu- and -Tyr-|-Trp bonds also occurs).. In terms of biological role, cleaves peptides in various proteins in a process that requires ATP hydrolysis. Has a chymotrypsin-like activity. Plays a major role in the degradation of misfolded proteins. This chain is ATP-dependent Clp protease proteolytic subunit 2, found in Chlamydia abortus (strain DSM 27085 / S26/3) (Chlamydophila abortus).